We begin with the raw amino-acid sequence, 643 residues long: U3 small nucleolar RNA-associated protein 5 (643 aa).

WD repeat units lie at residues 14–54, 55–98, 186–225, 227–266, 340–389, and 471–511; these read GQYL…LYLE, DSKL…VTYK, GHVS…TKCV, VAES…SSTK, SADR…LEQE, and RLKP…IHGG. Residues 565–643 form a disordered region; the sequence is HSSEPVVEED…EAGYSDVEME (79 aa). The segment covering 570–611 has biased composition (acidic residues); sequence VVEEDEDDVEYNEELDDAGLIEDGEESYGSEEEEEGDSDNEE. Residues 612 to 626 are compositionally biased toward basic and acidic residues; the sequence is EQKHTSSKQDGRLET. Over residues 627-643 the composition is skewed to acidic residues; that stretch reads EQSDGEEEAGYSDVEME.

The protein belongs to the UTP5 family. Interacts with snoRNA U3. Interacts with MPP10. Component of the ribosomal small subunit (SSU) processome composed of at least 40 protein subunits and snoRNA U3. In the absence of snoRNA3, forms a complex with other t-UTPs. This complex can associate with pre-18S ribosomal RNAs.

It is found in the nucleus. The protein resides in the nucleolus. Functionally, involved in nucleolar processing of pre-18S ribosomal RNA. Required for optimal pre-ribosomal RNA transcription by RNA polymerase I together with a subset of U3 proteins required for transcription (t-UTPs). The polypeptide is U3 small nucleolar RNA-associated protein 5 (UTP5) (Saccharomyces cerevisiae (strain ATCC 204508 / S288c) (Baker's yeast)).